A 379-amino-acid chain; its full sequence is Acyl-CoA dehydrogenase (379 aa).

The protein belongs to the acyl-CoA dehydrogenase family. FAD is required as a cofactor.

The enzyme catalyses a 2,3-saturated acyl-CoA + A = a 2,3-dehydroacyl-CoA + AH2. This chain is Acyl-CoA dehydrogenase (mmgC), found in Bacillus subtilis (strain 168).